Here is a 709-residue protein sequence, read N- to C-terminus: Ribosomal RNA large subunit methyltransferase K/L (709 aa).

In terms of domain architecture, THUMP spans 43–154 (LAYRITLWTR…NGVITIAMNF (112 aa)).

It belongs to the methyltransferase superfamily. RlmKL family.

It localises to the cytoplasm. It catalyses the reaction guanosine(2445) in 23S rRNA + S-adenosyl-L-methionine = N(2)-methylguanosine(2445) in 23S rRNA + S-adenosyl-L-homocysteine + H(+). It carries out the reaction guanosine(2069) in 23S rRNA + S-adenosyl-L-methionine = N(2)-methylguanosine(2069) in 23S rRNA + S-adenosyl-L-homocysteine + H(+). Its function is as follows. Specifically methylates the guanine in position 2445 (m2G2445) and the guanine in position 2069 (m7G2069) of 23S rRNA. In Shewanella baltica (strain OS195), this protein is Ribosomal RNA large subunit methyltransferase K/L.